The primary structure comprises 104 residues: Type VII secretion system extracellular protein B (104 aa).

The protein belongs to the WXG100 family. In terms of assembly, homodimer. When mixed with EsxA does not form heterodimers. Forms heterodimers with EsxD.

The protein resides in the secreted. Functionally, virulence factor that is important for the establishment of infection in the host. EsxB is required for EsxA synthesis as well as secretion. Mediates together with EsxA the release of S.aureus from the host cell. Also inhibits host cytokine production and thus modulates dendritic cell-mediated immunity. This chain is Type VII secretion system extracellular protein B, found in Staphylococcus aureus (strain USA300).